Here is a 520-residue protein sequence, read N- to C-terminus: GMP synthase [glutamine-hydrolyzing] (520 aa).

The 194-residue stretch at 9–202 (TILIIDFGSQ…VHRIVGVKPG (194 aa)) folds into the Glutamine amidotransferase type-1 domain. The Nucleophile role is filled by C86. Active-site residues include H176 and E178. One can recognise a GMPS ATP-PPase domain in the interval 203-395 (WTMGAYREQA…LGLPDSFIGR (193 aa)). ATP is bound at residue 230–236 (SGGVDSS).

As to quaternary structure, homodimer.

It catalyses the reaction XMP + L-glutamine + ATP + H2O = GMP + L-glutamate + AMP + diphosphate + 2 H(+). Its pathway is purine metabolism; GMP biosynthesis; GMP from XMP (L-Gln route): step 1/1. Functionally, catalyzes the synthesis of GMP from XMP. The chain is GMP synthase [glutamine-hydrolyzing] from Brucella abortus (strain S19).